Reading from the N-terminus, the 247-residue chain is DNA polymerase sliding clamp (247 aa).

It belongs to the PCNA family. As to quaternary structure, homotrimer. The subunits circularize to form a toroid; DNA passes through its center. Replication factor C (RFC) is required to load the toroid on the DNA.

In terms of biological role, sliding clamp subunit that acts as a moving platform for DNA processing. Responsible for tethering the catalytic subunit of DNA polymerase and other proteins to DNA during high-speed replication. The protein is DNA polymerase sliding clamp of Methanosphaerula palustris (strain ATCC BAA-1556 / DSM 19958 / E1-9c).